A 168-amino-acid chain; its full sequence is Gastrula zinc finger protein XlCGF42.1 (168 aa).

C2H2-type zinc fingers lie at residues 6 to 28 (YSCS…RKSH), 34 to 56 (FCCS…YRTH), 62 to 84 (CICS…QKYH), 90 to 112 (FSCS…LRIH), 118 to 140 (YTCT…LRIH), and 146 to 165 (FTCS…DRHH).

Belongs to the krueppel C2H2-type zinc-finger protein family.

The protein localises to the nucleus. Its function is as follows. May be involved in transcriptional regulation. This is Gastrula zinc finger protein XlCGF42.1 from Xenopus laevis (African clawed frog).